A 187-amino-acid chain; its full sequence is Oligoribonuclease (187 aa).

Residues 7-170 (LCWLDMEMTG…DDILESIEEM (164 aa)) enclose the Exonuclease domain. The active site involves tyrosine 128.

The protein belongs to the oligoribonuclease family.

The protein resides in the cytoplasm. Functionally, 3'-to-5' exoribonuclease specific for small oligoribonucleotides. The sequence is that of Oligoribonuclease from Neisseria meningitidis serogroup C / serotype 2a (strain ATCC 700532 / DSM 15464 / FAM18).